The primary structure comprises 253 residues: ABC transporter D-alanine-binding periplasmic protein (253 aa).

An N-terminal signal peptide occupies residues 1-22; sequence MLSKKFGLSMIVLGIMSSSAFA. 5 residues coordinate D-alanine: G95, S97, R102, A147, and E191.

This sequence belongs to the bacterial solute-binding protein 3 family. Monomer.

The protein resides in the periplasm. Functionally, part of the ABC transporter complex dalSTUV, that imports D-alanine into the cytoplasm. Helps protect the organism from oxidative killing by host neutrophils through sequestration of D-alanine, a substrate that is converted to hydrogen peroxide by the host enzyme DAO (D-amino acid oxidase). DalS shuttles D-alanine from the periplasm to the DalTUV complex situated in the inner membrane and through hydrolysis of ATP, D-alanine is transported across the membrane into the cytoplasm. Not required for the metabolism of D-alanine found in the stem peptide of peptidoglycan. The sequence is that of ABC transporter D-alanine-binding periplasmic protein from Salmonella typhimurium (strain LT2 / SGSC1412 / ATCC 700720).